The chain runs to 338 residues: Tetraacyldisaccharide 4'-kinase (338 aa).

63–70 (TVGGAGKT) lines the ATP pocket.

This sequence belongs to the LpxK family.

The catalysed reaction is a lipid A disaccharide + ATP = a lipid IVA + ADP + H(+). It functions in the pathway glycolipid biosynthesis; lipid IV(A) biosynthesis; lipid IV(A) from (3R)-3-hydroxytetradecanoyl-[acyl-carrier-protein] and UDP-N-acetyl-alpha-D-glucosamine: step 6/6. Transfers the gamma-phosphate of ATP to the 4'-position of a tetraacyldisaccharide 1-phosphate intermediate (termed DS-1-P) to form tetraacyldisaccharide 1,4'-bis-phosphate (lipid IVA). This chain is Tetraacyldisaccharide 4'-kinase, found in Hahella chejuensis (strain KCTC 2396).